Reading from the N-terminus, the 308-residue chain is Acetylglutamate kinase (308 aa).

Substrate is bound by residues 64–65 (GG), Arg-86, and Asn-192.

It belongs to the acetylglutamate kinase family. ArgB subfamily.

The protein localises to the cytoplasm. The enzyme catalyses N-acetyl-L-glutamate + ATP = N-acetyl-L-glutamyl 5-phosphate + ADP. It functions in the pathway amino-acid biosynthesis; L-arginine biosynthesis; N(2)-acetyl-L-ornithine from L-glutamate: step 2/4. Functionally, catalyzes the ATP-dependent phosphorylation of N-acetyl-L-glutamate. The polypeptide is Acetylglutamate kinase (Myxococcus xanthus (strain DK1622)).